Reading from the N-terminus, the 227-residue chain is MAKQKQQYVTIKGTKDGLTLHLDDRCSYDDLLKEIEERLVKQAGVAPDSPLVSVHLKIGNRYLTPAQEEEVRALIRRSKNLVVDSIESNVMSKAEAIEWMRKTEIVPVSRIVRSGQVLHVEGDLLLIGDVNPGGTVIAGGNIFILGALRGIAHAGYAGNKQAIIVASVMKPMQLRIGDIMSRAPDSKTDEGNEMECAYIDEHNQIVVDRLQLLMHLRPNLTRLERRM.

Belongs to the MinC family. In terms of assembly, interacts with MinD and FtsZ.

Its function is as follows. Cell division inhibitor that blocks the formation of polar Z ring septums. Rapidly oscillates between the poles of the cell to destabilize FtsZ filaments that have formed before they mature into polar Z rings. Prevents FtsZ polymerization. The polypeptide is Probable septum site-determining protein MinC (Geobacillus kaustophilus (strain HTA426)).